The sequence spans 414 residues: uncharacterized protein (414 aa).

A Nop domain is found at E246–R360. The disordered stretch occupies residues I358–K414. The segment covering K361–K414 has biased composition (basic residues).

This sequence belongs to the NOP5/NOP56 family.

This is an uncharacterized protein from Methanocaldococcus jannaschii (strain ATCC 43067 / DSM 2661 / JAL-1 / JCM 10045 / NBRC 100440) (Methanococcus jannaschii).